A 553-amino-acid polypeptide reads, in one-letter code: Membrane protein insertase YidC (553 aa).

Residues 3 to 23 traverse the membrane as a helical segment; the sequence is IKRTILWVIFSLSVVLLFDNW. Residues 44–64 are disordered; that stretch reads AAAPGGTPAGDVPKAAAPAAA. The next 4 membrane-spanning stretches (helical) occupy residues 359-379, 429-449, 467-487, and 507-527; these read LLGN…LVFF, LGGC…YWVL, LASP…MFVQ, and PIAF…YWVV.

The protein belongs to the OXA1/ALB3/YidC family. Type 1 subfamily. Interacts with the Sec translocase complex via SecD. Specifically interacts with transmembrane segments of nascent integral membrane proteins during membrane integration.

It is found in the cell inner membrane. Its function is as follows. Required for the insertion and/or proper folding and/or complex formation of integral membrane proteins into the membrane. Involved in integration of membrane proteins that insert both dependently and independently of the Sec translocase complex, as well as at least some lipoproteins. Aids folding of multispanning membrane proteins. This is Membrane protein insertase YidC from Ralstonia nicotianae (strain ATCC BAA-1114 / GMI1000) (Ralstonia solanacearum).